The sequence spans 1908 residues: Putative ankyrin repeat protein L484 (1908 aa).

ANK repeat units follow at residues 20–50, 60–97, 101–130, 134–167, and 1370–1399; these read DIMEQFFLTIKTGDIDKIRNFVAQNKNKFNI, PNKTPIHAVLELDDRIADQETKLTIIKYLDKMGAPMDL, DNVWPIHLAAADQDEDIIDYMLKNKVSIDR, SNNTPLHYAVYGKQVPCFDKVKVGSIVPPQDIDK, and DGNTPLHLAISMTNPDIVEILLKHGANPFT. Residues 1539-1603 adopt a coiled-coil conformation; the sequence is VQLLNPKLRD…QTNISDLEFK (65 aa).

The protein resides in the virion. The sequence is that of Putative ankyrin repeat protein L484 from Acanthamoeba polyphaga mimivirus (APMV).